A 207-amino-acid chain; its full sequence is Small ribosomal subunit protein uS7y (207 aa).

N-acetylalanine is present on Ala-2.

The protein belongs to the universal ribosomal protein uS7 family. In terms of tissue distribution, expressed in root tips, lateral root primordia, leaf primordia, shoot apical meristem and vasculature of cotyledons.

In Arabidopsis thaliana (Mouse-ear cress), this protein is Small ribosomal subunit protein uS7y.